A 369-amino-acid chain; its full sequence is Ribosomal RNA large subunit methyltransferase M (369 aa).

Residues S198, 231–234 (APGG), D250, D270, and D287 contribute to the S-adenosyl-L-methionine site. K316 (proton acceptor) is an active-site residue.

Belongs to the class I-like SAM-binding methyltransferase superfamily. RNA methyltransferase RlmE family. RlmM subfamily. As to quaternary structure, monomer.

The protein localises to the cytoplasm. It carries out the reaction cytidine(2498) in 23S rRNA + S-adenosyl-L-methionine = 2'-O-methylcytidine(2498) in 23S rRNA + S-adenosyl-L-homocysteine + H(+). Functionally, catalyzes the 2'-O-methylation at nucleotide C2498 in 23S rRNA. The sequence is that of Ribosomal RNA large subunit methyltransferase M from Idiomarina loihiensis (strain ATCC BAA-735 / DSM 15497 / L2-TR).